Reading from the N-terminus, the 210-residue chain is Thymidylate kinase (210 aa).

10 to 17 (GIDGCGKT) is an ATP binding site.

The protein belongs to the thymidylate kinase family.

It catalyses the reaction dTMP + ATP = dTDP + ADP. Functionally, phosphorylation of dTMP to form dTDP in both de novo and salvage pathways of dTTP synthesis. The polypeptide is Thymidylate kinase (Prochlorococcus marinus (strain MIT 9515)).